The following is a 589-amino-acid chain: ATP-dependent lipid A-core flippase (589 aa).

6 helical membrane passes run 33–53, 70–90, 148–168, 170–190, 262–282, and 283–303; these read VLAIVCMVLAAAGQAAFAWII, LWVPATLVGIFLFHGVTTFAS, VVVLVRDTFTVIFLLAYMTYL, GWLVMIVFGLGPLVAVVVTAA, LGAVIALAIILYLATMDVILE, and TISPGGMISFIAAMLLMLPPL. Positions 33–315 constitute an ABC transmembrane type-1 domain; sequence VLAIVCMVLA…VIGVNAEIQK (283 aa). Positions 347–583 constitute an ABC transporter domain; that stretch reads IEFDRVAFRY…NGHYASLHRV (237 aa). 381 to 388 serves as a coordination point for ATP; it reads GRSGSGKT.

This sequence belongs to the ABC transporter superfamily. Lipid exporter (TC 3.A.1.106) family. As to quaternary structure, homodimer.

Its subcellular location is the cell inner membrane. The catalysed reaction is ATP + H2O + lipid A-core oligosaccharideSide 1 = ADP + phosphate + lipid A-core oligosaccharideSide 2.. Involved in lipopolysaccharide (LPS) biosynthesis. Translocates lipid A-core from the inner to the outer leaflet of the inner membrane. Transmembrane domains (TMD) form a pore in the inner membrane and the ATP-binding domain (NBD) is responsible for energy generation. This is ATP-dependent lipid A-core flippase from Alkalilimnicola ehrlichii (strain ATCC BAA-1101 / DSM 17681 / MLHE-1).